The sequence spans 92 residues: Acylphosphatase (92 aa).

The Acylphosphatase-like domain occupies 6 to 92 (RAHVYVSGRV…EGVDGFEIRR (87 aa)). Catalysis depends on residues Arg-21 and Asn-39.

Belongs to the acylphosphatase family.

The enzyme catalyses an acyl phosphate + H2O = a carboxylate + phosphate + H(+). This chain is Acylphosphatase (acyP), found in Natronomonas pharaonis (strain ATCC 35678 / DSM 2160 / CIP 103997 / JCM 8858 / NBRC 14720 / NCIMB 2260 / Gabara) (Halobacterium pharaonis).